The sequence spans 205 residues: High frequency lysogenization protein HflD homolog (205 aa).

It belongs to the HflD family.

The protein resides in the cytoplasm. It is found in the cell inner membrane. The protein is High frequency lysogenization protein HflD homolog of Vibrio campbellii (strain ATCC BAA-1116).